Consider the following 683-residue polypeptide: Acetyl-coenzyme A synthetase 2 (683 aa).

CoA-binding positions include 206-209 (RGGK) and threonine 325. Residues 401 to 403 (GEP) and 425 to 430 (DTMWQT) each bind ATP. 425-430 (DTMWQT) contacts AMP. Lysine 506 participates in a covalent cross-link: Glycyl lysine isopeptide (Lys-Gly) (interchain with G-Cter in ubiquitin). ATP is bound by residues aspartate 516 and arginine 531. 2 residues coordinate AMP: aspartate 516 and arginine 531. Position 539 (serine 539) interacts with CoA. Residue arginine 542 coordinates ATP. Arginine 612 is a CoA binding site. Serine 679 is subject to Phosphoserine.

It belongs to the ATP-dependent AMP-binding enzyme family.

Its subcellular location is the cytoplasm. It localises to the nucleus. It catalyses the reaction acetate + ATP + CoA = acetyl-CoA + AMP + diphosphate. It participates in carbohydrate metabolism; pyruvate metabolism. In terms of biological role, catalyzes the production of acetyl-CoA. Provides the acetyl-CoA source for histone acetylation in the nucleus. 'Anaerobic' isozyme of acetyl-coenzyme A synthetase, which is required for growth on fermentable carbon sources such as glucose. May be involved in the PDH (pyruvate dehydrogenase complex) bypass. This chain is Acetyl-coenzyme A synthetase 2, found in Saccharomyces cerevisiae (strain ATCC 204508 / S288c) (Baker's yeast).